A 194-amino-acid polypeptide reads, in one-letter code: 7-methyl-GTP pyrophosphatase (194 aa).

The Proton acceptor role is filled by Asp67.

It belongs to the Maf family. YceF subfamily. The cofactor is a divalent metal cation.

It is found in the cytoplasm. It catalyses the reaction N(7)-methyl-GTP + H2O = N(7)-methyl-GMP + diphosphate + H(+). In terms of biological role, nucleoside triphosphate pyrophosphatase that hydrolyzes 7-methyl-GTP (m(7)GTP). May have a dual role in cell division arrest and in preventing the incorporation of modified nucleotides into cellular nucleic acids. This is 7-methyl-GTP pyrophosphatase from Pseudoalteromonas atlantica (strain T6c / ATCC BAA-1087).